The chain runs to 268 residues: 4-hydroxy-tetrahydrodipicolinate reductase (268 aa).

NAD(+) is bound by residues Gly8–Met13, Asp34, Gly95–Thr97, and Ala121–Phe124. His151 serves as the catalytic Proton donor/acceptor. His152 is a binding site for (S)-2,3,4,5-tetrahydrodipicolinate. The active-site Proton donor is Lys155. Gly161–Thr162 provides a ligand contact to (S)-2,3,4,5-tetrahydrodipicolinate.

Belongs to the DapB family.

It is found in the cytoplasm. The catalysed reaction is (S)-2,3,4,5-tetrahydrodipicolinate + NAD(+) + H2O = (2S,4S)-4-hydroxy-2,3,4,5-tetrahydrodipicolinate + NADH + H(+). It catalyses the reaction (S)-2,3,4,5-tetrahydrodipicolinate + NADP(+) + H2O = (2S,4S)-4-hydroxy-2,3,4,5-tetrahydrodipicolinate + NADPH + H(+). Its pathway is amino-acid biosynthesis; L-lysine biosynthesis via DAP pathway; (S)-tetrahydrodipicolinate from L-aspartate: step 4/4. In terms of biological role, catalyzes the conversion of 4-hydroxy-tetrahydrodipicolinate (HTPA) to tetrahydrodipicolinate. The polypeptide is 4-hydroxy-tetrahydrodipicolinate reductase (Dictyoglomus turgidum (strain DSM 6724 / Z-1310)).